The following is a 435-amino-acid chain: Divergent protein kinase domain 2B (435 aa).

The signal sequence occupies residues 1 to 33 (MESQWRGAAATAFHQHWLARLLLWVSTLSCSFS). 2 N-linked (GlcNAc...) asparagine glycosylation sites follow: N102 and N395.

This sequence belongs to the DIPK family.

Its subcellular location is the secreted. This Mus musculus (Mouse) protein is Divergent protein kinase domain 2B (Dipk2b).